We begin with the raw amino-acid sequence, 547 residues long: Chaperonin GroEL (547 aa).

ATP is bound by residues 30–33, K51, 87–91, G415, 480–482, and D496; these read TLGP, DGTTT, and NAA.

Belongs to the chaperonin (HSP60) family. As to quaternary structure, forms a cylinder of 14 subunits composed of two heptameric rings stacked back-to-back. Interacts with the co-chaperonin GroES.

It localises to the cytoplasm. It carries out the reaction ATP + H2O + a folded polypeptide = ADP + phosphate + an unfolded polypeptide.. Functionally, together with its co-chaperonin GroES, plays an essential role in assisting protein folding. The GroEL-GroES system forms a nano-cage that allows encapsulation of the non-native substrate proteins and provides a physical environment optimized to promote and accelerate protein folding. The protein is Chaperonin GroEL of Glaesserella parasuis serovar 5 (strain SH0165) (Haemophilus parasuis).